We begin with the raw amino-acid sequence, 199 residues long: Recombination protein RecR (199 aa).

The C4-type zinc-finger motif lies at 57–72 (CSICGNITEDDPCDIC). One can recognise a Toprim domain in the interval 80 to 176 (KAVLVVEDSK…KVTRLAHGLS (97 aa)).

This sequence belongs to the RecR family.

In terms of biological role, may play a role in DNA repair. It seems to be involved in an RecBC-independent recombinational process of DNA repair. It may act with RecF and RecO. The protein is Recombination protein RecR of Pediococcus pentosaceus (strain ATCC 25745 / CCUG 21536 / LMG 10740 / 183-1w).